The primary structure comprises 363 residues: Chorismate synthase (363 aa).

Residues Arg-48 and Arg-54 each contribute to the NADP(+) site. FMN is bound by residues 125 to 127 (RSS), 237 to 238 (NA), Gly-277, 292 to 296 (KPTSS), and Arg-318.

The protein belongs to the chorismate synthase family. In terms of assembly, homotetramer. It depends on FMNH2 as a cofactor.

The catalysed reaction is 5-O-(1-carboxyvinyl)-3-phosphoshikimate = chorismate + phosphate. It functions in the pathway metabolic intermediate biosynthesis; chorismate biosynthesis; chorismate from D-erythrose 4-phosphate and phosphoenolpyruvate: step 7/7. Functionally, catalyzes the anti-1,4-elimination of the C-3 phosphate and the C-6 proR hydrogen from 5-enolpyruvylshikimate-3-phosphate (EPSP) to yield chorismate, which is the branch point compound that serves as the starting substrate for the three terminal pathways of aromatic amino acid biosynthesis. This reaction introduces a second double bond into the aromatic ring system. The sequence is that of Chorismate synthase from Pseudomonas paraeruginosa (strain DSM 24068 / PA7) (Pseudomonas aeruginosa (strain PA7)).